The chain runs to 194 residues: 7-methyl-GTP pyrophosphatase (194 aa).

The Proton acceptor role is filled by aspartate 70.

The protein belongs to the Maf family. YceF subfamily. It depends on a divalent metal cation as a cofactor.

It is found in the cytoplasm. The enzyme catalyses N(7)-methyl-GTP + H2O = N(7)-methyl-GMP + diphosphate + H(+). Functionally, nucleoside triphosphate pyrophosphatase that hydrolyzes 7-methyl-GTP (m(7)GTP). May have a dual role in cell division arrest and in preventing the incorporation of modified nucleotides into cellular nucleic acids. This Vibrio vulnificus (strain CMCP6) protein is 7-methyl-GTP pyrophosphatase.